Here is a 103-residue protein sequence, read N- to C-terminus: Large ribosomal subunit protein bL36m (103 aa).

This sequence belongs to the bacterial ribosomal protein bL36 family. Component of the mitochondrial large ribosomal subunit (mt-LSU). Mature mammalian 55S mitochondrial ribosomes consist of a small (28S) and a large (39S) subunit. The 28S small subunit contains a 12S ribosomal RNA (12S mt-rRNA) and 30 different proteins. The 39S large subunit contains a 16S rRNA (16S mt-rRNA), a copy of mitochondrial valine transfer RNA (mt-tRNA(Val)), which plays an integral structural role, and 52 different proteins. bL36m has a zinc binding site.

The protein resides in the mitochondrion. This is Large ribosomal subunit protein bL36m (MRPL36) from Homo sapiens (Human).